Here is a 214-residue protein sequence, read N- to C-terminus: Tungstate uptake system ATP-binding protein TupC (214 aa).

Residues 3–214 form the ABC transporter domain; it reads ITVSNLKKSY…GRVGEADGFF (212 aa). 35-42 is a binding site for ATP; sequence GPNGAGKT.

The protein belongs to the ABC transporter superfamily. As to quaternary structure, the complex is composed of two ATP-binding proteins (TupC), two transmembrane proteins (TupB) and a solute-binding protein (TupA).

It catalyses the reaction tungstate(in) + ATP + H2O = tungstate(out) + ADP + phosphate + H(+). Its function is as follows. Part of an ABC transporter complex involved in tungstate uptake. Probably responsible for energy coupling to the transport system. The protein is Tungstate uptake system ATP-binding protein TupC of Peptoclostridium acidaminophilum (Eubacterium acidaminophilum).